The primary structure comprises 321 residues: uncharacterized protein (321 aa).

A disordered region spans residues Asn-280 to Glu-306. Over residues Asn-286–Glu-306 the composition is skewed to low complexity.

This is an uncharacterized protein from Dictyostelium discoideum (Social amoeba).